Reading from the N-terminus, the 476-residue chain is Adenosylhomocysteinase (476 aa).

Residues Thr62, Asp141, and Glu201 each contribute to the substrate site. 202 to 204 (TTT) lines the NAD(+) pocket. Residues Lys231 and Asp235 each contribute to the substrate site. Residues Asn236, 265–270 (GYGDVG), Glu288, Asn323, 344–346 (IGH), and Asn389 contribute to the NAD(+) site.

This sequence belongs to the adenosylhomocysteinase family. The cofactor is NAD(+).

Its subcellular location is the cytoplasm. It carries out the reaction S-adenosyl-L-homocysteine + H2O = L-homocysteine + adenosine. Its pathway is amino-acid biosynthesis; L-homocysteine biosynthesis; L-homocysteine from S-adenosyl-L-homocysteine: step 1/1. Functionally, may play a key role in the regulation of the intracellular concentration of adenosylhomocysteine. The polypeptide is Adenosylhomocysteinase (Delftia acidovorans (strain DSM 14801 / SPH-1)).